A 319-amino-acid polypeptide reads, in one-letter code: GTP 3',8-cyclase (319 aa).

In terms of domain architecture, Radical SAM core spans 4 to 219 (KHGRKINYLR…SKHSDLIPVE (216 aa)). Arg-13 serves as a coordination point for GTP. [4Fe-4S] cluster contacts are provided by Cys-20 and Cys-24. Residue Tyr-26 participates in S-adenosyl-L-methionine binding. Position 27 (Cys-27) interacts with [4Fe-4S] cluster. Arg-63 provides a ligand contact to GTP. Residue Gly-67 participates in S-adenosyl-L-methionine binding. Thr-94 is a binding site for GTP. S-adenosyl-L-methionine is bound at residue Ser-118. Lys-155 provides a ligand contact to GTP. Met-189 contributes to the S-adenosyl-L-methionine binding site. Residues Cys-249 and Cys-252 each coordinate [4Fe-4S] cluster. Residue 254–256 (RVR) coordinates GTP. Residue Cys-266 participates in [4Fe-4S] cluster binding.

This sequence belongs to the radical SAM superfamily. MoaA family. Monomer and homodimer. It depends on [4Fe-4S] cluster as a cofactor.

It carries out the reaction GTP + AH2 + S-adenosyl-L-methionine = (8S)-3',8-cyclo-7,8-dihydroguanosine 5'-triphosphate + 5'-deoxyadenosine + L-methionine + A + H(+). It participates in cofactor biosynthesis; molybdopterin biosynthesis. In terms of biological role, catalyzes the cyclization of GTP to (8S)-3',8-cyclo-7,8-dihydroguanosine 5'-triphosphate. This chain is GTP 3',8-cyclase, found in Clostridium botulinum (strain Okra / Type B1).